A 327-amino-acid polypeptide reads, in one-letter code: Phenylalanine--tRNA ligase alpha subunit (327 aa).

Glutamate 252 is a Mg(2+) binding site.

This sequence belongs to the class-II aminoacyl-tRNA synthetase family. Phe-tRNA synthetase alpha subunit type 1 subfamily. Tetramer of two alpha and two beta subunits. Mg(2+) serves as cofactor.

It is found in the cytoplasm. It carries out the reaction tRNA(Phe) + L-phenylalanine + ATP = L-phenylalanyl-tRNA(Phe) + AMP + diphosphate + H(+). In Shewanella frigidimarina (strain NCIMB 400), this protein is Phenylalanine--tRNA ligase alpha subunit.